Here is a 152-residue protein sequence, read N- to C-terminus: UPF0266 membrane protein YobD (152 aa).

3 helical membrane-spanning segments follow: residues 6-26 (LVLI…QFIM), 45-65 (IDSV…VTNH), and 67-87 (AQIT…IFWI).

The protein belongs to the UPF0266 family.

The protein resides in the cell inner membrane. This is UPF0266 membrane protein YobD from Escherichia fergusonii (strain ATCC 35469 / DSM 13698 / CCUG 18766 / IAM 14443 / JCM 21226 / LMG 7866 / NBRC 102419 / NCTC 12128 / CDC 0568-73).